Reading from the N-terminus, the 135-residue chain is Nucleoside diphosphate kinase (135 aa).

K9, F57, R85, T91, R102, and N112 together coordinate ATP. H115 functions as the Pros-phosphohistidine intermediate in the catalytic mechanism.

This sequence belongs to the NDK family. In terms of assembly, homotetramer. It depends on Mg(2+) as a cofactor.

It localises to the cytoplasm. It carries out the reaction a 2'-deoxyribonucleoside 5'-diphosphate + ATP = a 2'-deoxyribonucleoside 5'-triphosphate + ADP. It catalyses the reaction a ribonucleoside 5'-diphosphate + ATP = a ribonucleoside 5'-triphosphate + ADP. Functionally, major role in the synthesis of nucleoside triphosphates other than ATP. The ATP gamma phosphate is transferred to the NDP beta phosphate via a ping-pong mechanism, using a phosphorylated active-site intermediate. The chain is Nucleoside diphosphate kinase from Thermobifida fusca (strain YX).